The chain runs to 70 residues: TTNNNNTKAVPEAKAALKQMKLEIANELGISNYDTADKGNMTARQNGYVGGYMTKKLVEMAEQQMSGQQR.

Belongs to the alpha/beta-type SASP family.

SASP are bound to spore DNA. They are double-stranded DNA-binding proteins that cause DNA to change to an a-like conformation. They protect the DNA backbone from chemical and enzymatic cleavage and are thus involved in dormant spore's high resistance to UV light. In Paraclostridium bifermentans (Clostridium bifermentans), this protein is Small, acid-soluble spore protein alpha.